The sequence spans 380 residues: Maintenance of mitochondrial morphology protein 1 (380 aa).

Residues 1-64 (MQGRAIWAEG…IVPSLSFIQG (64 aa)) are Lumenal-facing. Residues 65 to 85 (FMAGQAVLLMLFLGLFRYFFM) traverse the membrane as a helical segment. The Cytoplasmic portion of the chain corresponds to 86 to 380 (TSSPGTRAQQ…IGTSPADPLA (295 aa)). One can recognise an SMP-LTD domain in the interval 147–369 (APESLDWLNV…WPHFWHIPLP (223 aa)).

It belongs to the MMM1 family. Homodimer. Component of the ER-mitochondria encounter structure (ERMES) or MDM complex, composed of MMM1, MDM10, MDM12 and MDM34. An MMM1 homodimer associates with one molecule of MDM12 on each side in a pairwise head-to-tail manner, and the SMP-LTD domains of MMM1 and MDM12 generate a continuous hydrophobic tunnel for phospholipid trafficking.

Its subcellular location is the endoplasmic reticulum membrane. Component of the ERMES/MDM complex, which serves as a molecular tether to connect the endoplasmic reticulum (ER) and mitochondria. Components of this complex are involved in the control of mitochondrial shape and protein biogenesis, and function in nonvesicular lipid trafficking between the ER and mitochondria. The MDM12-MMM1 subcomplex functions in the major beta-barrel assembly pathway that is responsible for biogenesis of all outer membrane beta-barrel proteins, and acts in a late step after the SAM complex. The MDM10-MDM12-MMM1 subcomplex further acts in the TOM40-specific pathway after the action of the MDM12-MMM1 complex. Essential for establishing and maintaining the structure of mitochondria and maintenance of mtDNA nucleoids. This is Maintenance of mitochondrial morphology protein 1 from Malassezia globosa (strain ATCC MYA-4612 / CBS 7966) (Dandruff-associated fungus).